Reading from the N-terminus, the 513-residue chain is Zinc finger CCCH-type with G patch domain-containing protein (513 aa).

A C3H1-type zinc finger spans residues 155-178 (PCSYYLEGECRFDETKCRFSHGAL). Over residues 252–261 (DQEEDDELSS) the composition is skewed to acidic residues. Residues 252–282 (DQEEDDELSSEESNSSMNNESSDEAESDMDD) form a disordered region. Residues 262–271 (EESNSSMNNE) show a composition bias toward low complexity. The span at 272 to 282 (SSDEAESDMDD) shows a compositional bias: acidic residues. The 47-residue stretch at 312–358 (TRGIGSKLMEKMGYIHGTGLGSDGRGIVTPVSAQILPQGRSLDACME) folds into the G-patch domain. A compositionally biased stretch (polar residues) spans 478–495 (VQMQSHKQELATLQAQER). Residues 478–513 (VQMQSHKQELATLQAQERSLSKEQQTRKSKNKMFEF) are disordered. A compositionally biased stretch (basic and acidic residues) spans 496-513 (SLSKEQQTRKSKNKMFEF).

It localises to the nucleus. Transcription repressor. The sequence is that of Zinc finger CCCH-type with G patch domain-containing protein from Drosophila erecta (Fruit fly).